Reading from the N-terminus, the 194-residue chain is Flavin prenyltransferase UbiX (194 aa).

Residues 9–11 (GAS), serine 35, 86–89 (SIKT), and arginine 121 each bind FMN. Positions 151 and 167 each coordinate dimethylallyl phosphate.

It belongs to the UbiX/PAD1 family.

The catalysed reaction is dimethylallyl phosphate + FMNH2 = prenylated FMNH2 + phosphate. Its function is as follows. Involved in the carboxylation of phenylphosphate. Flavin prenyltransferase that catalyzes the synthesis of the prenylated FMN cofactor (prenyl-FMN) for 4-hydroxy-3-polyprenylbenzoic acid decarboxylase UbiD. The prenyltransferase is metal-independent and links a dimethylallyl moiety from dimethylallyl monophosphate (DMAP) to the flavin N5 and C6 atoms of FMN. This Thauera aromatica protein is Flavin prenyltransferase UbiX.